The chain runs to 254 residues: 4-hydroxy-tetrahydrodipicolinate reductase (254 aa).

Position 7 to 12 (7 to 12) interacts with NAD(+); sequence GASGRI. Residue Arg-35 coordinates NADP(+). Residues 91 to 93 and 115 to 118 contribute to the NAD(+) site; these read GTT and AHNM. Catalysis depends on His-147, which acts as the Proton donor/acceptor. A (S)-2,3,4,5-tetrahydrodipicolinate-binding site is contributed by His-148. Residue Lys-151 is the Proton donor of the active site. 157–158 is a (S)-2,3,4,5-tetrahydrodipicolinate binding site; the sequence is GT.

The protein belongs to the DapB family.

It localises to the cytoplasm. The catalysed reaction is (S)-2,3,4,5-tetrahydrodipicolinate + NAD(+) + H2O = (2S,4S)-4-hydroxy-2,3,4,5-tetrahydrodipicolinate + NADH + H(+). It carries out the reaction (S)-2,3,4,5-tetrahydrodipicolinate + NADP(+) + H2O = (2S,4S)-4-hydroxy-2,3,4,5-tetrahydrodipicolinate + NADPH + H(+). It participates in amino-acid biosynthesis; L-lysine biosynthesis via DAP pathway; (S)-tetrahydrodipicolinate from L-aspartate: step 4/4. Functionally, catalyzes the conversion of 4-hydroxy-tetrahydrodipicolinate (HTPA) to tetrahydrodipicolinate. The protein is 4-hydroxy-tetrahydrodipicolinate reductase of Helicobacter pylori (strain P12).